A 385-amino-acid polypeptide reads, in one-letter code: MNIHEYQGKEVLRKYGVSVPEGKVAFTAEEAVEKAESLSSSVYVVKAQIHAGGRGKAGGVKIAKTKDEVKEYAEELLGKTLVTHQTGPDGQVIKRLLIEEGCDIKKEYYVGLVLDRATSRIVLMASEEGGTEIEEVAEKTPEKIKKAVIDPAVGLQGYQAREIAFAINIPKELVGKAAKFMLGLYKAFVEKDCSIAEINPLVVTGDGNVMALDAKLNFDSNALYRQKDIMEYRDLDEEDPKEIEASKYDLSYISLDGNIGCMVNGAGLAMSTMDIIKHYGGEPANFLDVGGGATAEKVTEAFKIILSDQNVKGIFVNIFGGIMKCDVIAEGVVEATRQVGLTLPLVVRLEGTNVDLGKKILNESGLNITSAESMADGAQKIVSLV.

The ATP-grasp domain occupies lysine 9–glutamate 244. ATP contacts are provided by residues lysine 46, glycine 53–glycine 55, glutamate 99, cysteine 102, and glutamate 107. Residues asparagine 199 and aspartate 213 each coordinate Mg(2+). Substrate-binding positions include asparagine 264 and glycine 321–methionine 323.

The protein belongs to the succinate/malate CoA ligase beta subunit family. Heterotetramer of two alpha and two beta subunits. Mg(2+) serves as cofactor.

The catalysed reaction is succinate + ATP + CoA = succinyl-CoA + ADP + phosphate. The enzyme catalyses GTP + succinate + CoA = succinyl-CoA + GDP + phosphate. It participates in carbohydrate metabolism; tricarboxylic acid cycle; succinate from succinyl-CoA (ligase route): step 1/1. Functionally, succinyl-CoA synthetase functions in the citric acid cycle (TCA), coupling the hydrolysis of succinyl-CoA to the synthesis of either ATP or GTP and thus represents the only step of substrate-level phosphorylation in the TCA. The beta subunit provides nucleotide specificity of the enzyme and binds the substrate succinate, while the binding sites for coenzyme A and phosphate are found in the alpha subunit. This is Succinate--CoA ligase [ADP-forming] subunit beta from Bacillus velezensis (strain DSM 23117 / BGSC 10A6 / LMG 26770 / FZB42) (Bacillus amyloliquefaciens subsp. plantarum).